Here is a 728-residue protein sequence, read N- to C-terminus: Histone demethylase JHD2 (728 aa).

A JmjN domain is found at 4–47 (IPALYPTEQEFKNPIDYLSNPHIKRLGVRYGMVKVVPPNGFCPP). The PHD-type zinc finger occupies 235–285 (DDACIVCRKTNDPKRTILCDSCDKPFHIYCLSPPLERVPSGDWICNTCIVG). Positions 381–549 (KYCDHPMNLT…YGFGAITDYK (169 aa)) constitute a JmjC domain. His427, Asp430, and His517 together coordinate Fe cation.

It belongs to the JARID1 histone demethylase family. It depends on Fe(2+) as a cofactor.

The protein resides in the nucleus. The enzyme catalyses N(6),N(6),N(6)-trimethyl-L-lysyl(4)-[histone H3] + 3 2-oxoglutarate + 3 O2 = L-lysyl(4)-[histone H3] + 3 formaldehyde + 3 succinate + 3 CO2. Its function is as follows. Histone demethylase that demethylates 'Lys-4' of histone H3, thereby playing a central role in histone code. Demethylates trimethylated H3 'Lys-4'. The polypeptide is Histone demethylase JHD2 (JHD2) (Saccharomyces cerevisiae (strain ATCC 204508 / S288c) (Baker's yeast)).